Reading from the N-terminus, the 160-residue chain is 6,7-dimethyl-8-ribityllumazine synthase (160 aa).

Residues Phe23, 61 to 63, and 85 to 87 each bind 5-amino-6-(D-ribitylamino)uracil; these read SFE and AVI. Residue 90–91 participates in (2S)-2-hydroxy-3-oxobutyl phosphate binding; it reads DT. His93 functions as the Proton donor in the catalytic mechanism. Phe118 is a binding site for 5-amino-6-(D-ribitylamino)uracil. Arg132 contributes to the (2S)-2-hydroxy-3-oxobutyl phosphate binding site.

This sequence belongs to the DMRL synthase family.

It carries out the reaction (2S)-2-hydroxy-3-oxobutyl phosphate + 5-amino-6-(D-ribitylamino)uracil = 6,7-dimethyl-8-(1-D-ribityl)lumazine + phosphate + 2 H2O + H(+). The protein operates within cofactor biosynthesis; riboflavin biosynthesis; riboflavin from 2-hydroxy-3-oxobutyl phosphate and 5-amino-6-(D-ribitylamino)uracil: step 1/2. In terms of biological role, catalyzes the formation of 6,7-dimethyl-8-ribityllumazine by condensation of 5-amino-6-(D-ribitylamino)uracil with 3,4-dihydroxy-2-butanone 4-phosphate. This is the penultimate step in the biosynthesis of riboflavin. The sequence is that of 6,7-dimethyl-8-ribityllumazine synthase from Synechococcus sp. (strain CC9311).